The chain runs to 374 residues: Ribosomal RNA large subunit methyltransferase G (374 aa).

The protein belongs to the methyltransferase superfamily. RlmG family.

Its subcellular location is the cytoplasm. The catalysed reaction is guanosine(1835) in 23S rRNA + S-adenosyl-L-methionine = N(2)-methylguanosine(1835) in 23S rRNA + S-adenosyl-L-homocysteine + H(+). Functionally, specifically methylates the guanine in position 1835 (m2G1835) of 23S rRNA. The polypeptide is Ribosomal RNA large subunit methyltransferase G (Photobacterium profundum (strain SS9)).